The chain runs to 1401 residues: Uveal autoantigen with coiled-coil domains and ankyrin repeats protein (1401 aa).

6 ANK repeats span residues L25–V53, E54–T83, A87–H116, Q120–A149, D153–S182, and Q186–L215. S265 carries the phosphoserine modification. 3 coiled-coil regions span residues T273 to K361, E423 to Y827, and A856 to I1368. K1020 is covalently cross-linked (Glycyl lysine isopeptide (Lys-Gly) (interchain with G-Cter in SUMO2)).

As to quaternary structure, component of the apoptosome complex, composed of APAF1, pro-caspase-9 and UACA. In the complex, it probably interacts directly with APAF1. Interacts with LGALS3. Interacts with ARF6 and ACTB. Interacts with RAB39A. As to expression, highly expressed in muscle and heart, moderately in liver, kidney and pancreas, and weakly in placenta and lung.

Its subcellular location is the nucleus. The protein resides in the cytoplasm. It localises to the cytoskeleton. Functionally, regulates APAF1 expression and plays an important role in the regulation of stress-induced apoptosis. Promotes apoptosis by regulating three pathways, apoptosome up-regulation, LGALS3/galectin-3 down-regulation and NF-kappa-B inactivation. Regulates the redistribution of APAF1 into the nucleus after proapoptotic stress. Down-regulates the expression of LGALS3 by inhibiting NFKB1. Its function is as follows. Modulates isoactin dynamics to regulate the morphological alterations required for cell growth and motility. Interaction with ARF6 may modulate cell shape and motility after injury. May be involved in multiple neurite formation. The chain is Uveal autoantigen with coiled-coil domains and ankyrin repeats protein (UACA) from Bos taurus (Bovine).